The chain runs to 240 residues: Pyridoxine 5'-phosphate synthase (240 aa).

Asn-7 contacts 3-amino-2-oxopropyl phosphate. 9-10 (DH) serves as a coordination point for 1-deoxy-D-xylulose 5-phosphate. Arg-18 contacts 3-amino-2-oxopropyl phosphate. His-43 functions as the Proton acceptor in the catalytic mechanism. 1-deoxy-D-xylulose 5-phosphate-binding residues include Arg-45 and His-50. The Proton acceptor role is filled by Glu-70. Thr-100 lines the 1-deoxy-D-xylulose 5-phosphate pocket. His-191 functions as the Proton donor in the catalytic mechanism. Residues Gly-192 and 213–214 (GH) contribute to the 3-amino-2-oxopropyl phosphate site.

The protein belongs to the PNP synthase family. As to quaternary structure, homooctamer; tetramer of dimers.

It is found in the cytoplasm. The enzyme catalyses 3-amino-2-oxopropyl phosphate + 1-deoxy-D-xylulose 5-phosphate = pyridoxine 5'-phosphate + phosphate + 2 H2O + H(+). Its pathway is cofactor biosynthesis; pyridoxine 5'-phosphate biosynthesis; pyridoxine 5'-phosphate from D-erythrose 4-phosphate: step 5/5. Functionally, catalyzes the complicated ring closure reaction between the two acyclic compounds 1-deoxy-D-xylulose-5-phosphate (DXP) and 3-amino-2-oxopropyl phosphate (1-amino-acetone-3-phosphate or AAP) to form pyridoxine 5'-phosphate (PNP) and inorganic phosphate. The chain is Pyridoxine 5'-phosphate synthase from Coxiella burnetii (strain Dugway 5J108-111).